The primary structure comprises 621 residues: Chaperone protein HtpG (621 aa).

Residues methionine 1–arginine 328 form an a; substrate-binding region. Residues glutamate 329 to arginine 544 form a b region. Positions aspartate 478–aspartate 498 are disordered. Positions serine 486–aspartate 498 are enriched in basic and acidic residues. The tract at residues phenylalanine 545–leucine 621 is c.

This sequence belongs to the heat shock protein 90 family. Homodimer.

The protein resides in the cytoplasm. Functionally, molecular chaperone. Has ATPase activity. In Rickettsia bellii (strain RML369-C), this protein is Chaperone protein HtpG.